The following is a 292-amino-acid chain: Homoserine kinase (292 aa).

84–94 (PLSRGLGSSSA) is an ATP binding site.

Belongs to the GHMP kinase family. Homoserine kinase subfamily.

Its subcellular location is the cytoplasm. The catalysed reaction is L-homoserine + ATP = O-phospho-L-homoserine + ADP + H(+). Its pathway is amino-acid biosynthesis; L-threonine biosynthesis; L-threonine from L-aspartate: step 4/5. Catalyzes the ATP-dependent phosphorylation of L-homoserine to L-homoserine phosphate. This Campylobacter jejuni subsp. jejuni serotype O:6 (strain 81116 / NCTC 11828) protein is Homoserine kinase.